The sequence spans 204 residues: Oocyte-specific homeobox protein 1 (204 aa).

The tract at residues 28-73 (EPARNLAFQMRQSPLVTPGSTTKSSLSVPERNLLKQESQGPSRQSG) is disordered. 2 stretches are compositionally biased toward polar residues: residues 37 to 54 (MRQS…SSLS) and 62 to 72 (KQESQGPSRQS). Positions 94 to 153 (FRKERTVYTKEQQGLLQKHFDECQYPNKKKIVELALSVGVTKREIKIWFKNNRAKYRRMN) form a DNA-binding region, homeobox.

This sequence belongs to the paired homeobox family. Obox subfamily. Specifically expressed in oocytes and early embryos.

The protein resides in the nucleus. Functionally, transcription factor required for zygotic genome activation (ZGA), a critical event in early embryonic development during which the developmental control passes from maternally provided mRNAs to the expression of the zygotic genome after fertilization. Together with other Obox family members, required in early two-cell stage embryos to kick-start the major ZGA wave by facilitating RNA Polymerase II 'pre-configuration', during which RNA Polymerase II relocates from the initial one-cell stage binding targets to ZGA gene promoters and distal enhancers. Mechanistically, promotes recruitment of RNA Polymerase II from (CG-rich) non-ZGA genes to (CG-poor) ZGA genes at the two-cell stage. Binds to regulatory DNA sequences containing a 5'-ACNCCTTTAATCCCAG-3' sequence motif. Most maternal and zygotic Obox family proteins can compensate for one another. In addition to its role in ZGA, promotes embryonic stem cell pluripotency. This Mus musculus (Mouse) protein is Oocyte-specific homeobox protein 1.